Here is a 204-residue protein sequence, read N- to C-terminus: MEPIRIGIGGPVGAGKTMLVEKLTRAMHKELSIAVVTNDIYTKEDAQFLLKHGVLPADRVIGVETGGCPHTAIREDASMNFPAIDELKERHPDLELIFIESGGDNLAATFSPELVDFSIYIIDVAQGEKIPRKGGQGMIKSVLFIINKIDLAPYVGASLEVMERDTLAARGDKPYIFTNLKDEIGLAEVLEWIKTNALLYGLES.

10 to 17 is a GTP binding site; sequence GPVGAGKT.

This sequence belongs to the SIMIBI class G3E GTPase family. UreG subfamily. As to quaternary structure, homodimer. UreD, UreF and UreG form a complex that acts as a GTP-hydrolysis-dependent molecular chaperone, activating the urease apoprotein by helping to assemble the nickel containing metallocenter of UreC. The UreE protein probably delivers the nickel.

The protein localises to the cytoplasm. Facilitates the functional incorporation of the urease nickel metallocenter. This process requires GTP hydrolysis, probably effectuated by UreG. In Bacillus sp. (strain TB-90), this protein is Urease accessory protein UreG.